A 249-amino-acid polypeptide reads, in one-letter code: Ditrans,polycis-undecaprenyl-diphosphate synthase ((2E,6E)-farnesyl-diphosphate specific) (249 aa).

The active site involves Asp-26. Position 26 (Asp-26) interacts with Mg(2+). Residues 27–30 (GNGR), Trp-31, Arg-39, His-43, and 71–73 (SRE) each bind substrate. Asn-74 serves as the catalytic Proton acceptor. Residues Trp-75, Arg-77, Arg-194, and 200–202 (RIS) contribute to the substrate site. Glu-213 contacts Mg(2+).

This sequence belongs to the UPP synthase family. In terms of assembly, homodimer. The cofactor is Mg(2+).

It catalyses the reaction 8 isopentenyl diphosphate + (2E,6E)-farnesyl diphosphate = di-trans,octa-cis-undecaprenyl diphosphate + 8 diphosphate. Its function is as follows. Catalyzes the sequential condensation of isopentenyl diphosphate (IPP) with (2E,6E)-farnesyl diphosphate (E,E-FPP) to yield (2Z,6Z,10Z,14Z,18Z,22Z,26Z,30Z,34E,38E)-undecaprenyl diphosphate (di-trans,octa-cis-UPP). UPP is the precursor of glycosyl carrier lipid in the biosynthesis of bacterial cell wall polysaccharide components such as peptidoglycan and lipopolysaccharide. The polypeptide is Ditrans,polycis-undecaprenyl-diphosphate synthase ((2E,6E)-farnesyl-diphosphate specific) (Buchnera aphidicola subsp. Schizaphis graminum (strain Sg)).